Consider the following 387-residue polypeptide: Succinate--CoA ligase [ADP-forming] subunit beta (387 aa).

An ATP-grasp domain is found at 9–244; it reads KAIFADNGIP…ITEENPAERE (236 aa). Residues K46, 53–55, E99, A102, and E107 each bind ATP; that span reads GRG. Residues N199 and D213 each coordinate Mg(2+). Substrate-binding positions include N264 and 321-323; that span reads GIV.

Belongs to the succinate/malate CoA ligase beta subunit family. As to quaternary structure, heterotetramer of two alpha and two beta subunits. Mg(2+) serves as cofactor.

It catalyses the reaction succinate + ATP + CoA = succinyl-CoA + ADP + phosphate. It carries out the reaction GTP + succinate + CoA = succinyl-CoA + GDP + phosphate. It participates in carbohydrate metabolism; tricarboxylic acid cycle; succinate from succinyl-CoA (ligase route): step 1/1. In terms of biological role, succinyl-CoA synthetase functions in the citric acid cycle (TCA), coupling the hydrolysis of succinyl-CoA to the synthesis of either ATP or GTP and thus represents the only step of substrate-level phosphorylation in the TCA. The beta subunit provides nucleotide specificity of the enzyme and binds the substrate succinate, while the binding sites for coenzyme A and phosphate are found in the alpha subunit. In Campylobacter jejuni subsp. jejuni serotype O:6 (strain 81116 / NCTC 11828), this protein is Succinate--CoA ligase [ADP-forming] subunit beta.